The sequence spans 316 residues: Beta-ketoacyl-[acyl-carrier-protein] synthase III (316 aa).

Active-site residues include Cys-112 and His-243. Positions 244–248 (QANLR) are ACP-binding. Residue Asn-273 is part of the active site.

It belongs to the thiolase-like superfamily. FabH family. In terms of assembly, homodimer.

Its subcellular location is the cytoplasm. It catalyses the reaction malonyl-[ACP] + acetyl-CoA + H(+) = 3-oxobutanoyl-[ACP] + CO2 + CoA. The protein operates within lipid metabolism; fatty acid biosynthesis. Functionally, catalyzes the condensation reaction of fatty acid synthesis by the addition to an acyl acceptor of two carbons from malonyl-ACP. Catalyzes the first condensation reaction which initiates fatty acid synthesis and may therefore play a role in governing the total rate of fatty acid production. Possesses both acetoacetyl-ACP synthase and acetyl transacylase activities. Its substrate specificity determines the biosynthesis of branched-chain and/or straight-chain of fatty acids. In Yersinia pestis (strain Pestoides F), this protein is Beta-ketoacyl-[acyl-carrier-protein] synthase III.